Here is a 105-residue protein sequence, read N- to C-terminus: Prokineticin-1 (105 aa).

A signal peptide spans 1 to 19 (MRGAVQVFIMLLLATVSDC). Disulfide bonds link cysteine 26–cysteine 38, cysteine 32–cysteine 50, cysteine 37–cysteine 78, cysteine 60–cysteine 86, and cysteine 80–cysteine 96.

It belongs to the AVIT (prokineticin) family.

It localises to the secreted. Potently contracts gastrointestinal (GI) smooth muscle. Induces proliferation, migration and fenestration (the formation of membrane discontinuities) in capillary endothelial cells derived from endocrine glands. Has little or no effect on a variety of other endothelial and non-endothelial cell types. Induces proliferation and differentiation, but not migration, of enteric neural crest cells. Directly influences neuroblastoma progression by promoting the proliferation and migration of neuroblastoma cells. Positively regulates PTGS2 expression and prostaglandin synthesis. May play a role in placentation. May play a role in normal and pathological testis angiogenesis. This is Prokineticin-1 (Prok1) from Rattus norvegicus (Rat).